The chain runs to 687 residues: Threonine--tRNA ligase (687 aa).

The TGS domain maps to M1–P67. The catalytic stretch occupies residues D266–P572. Zn(2+) contacts are provided by C371, H422, and H549.

It belongs to the class-II aminoacyl-tRNA synthetase family. As to quaternary structure, homodimer. The cofactor is Zn(2+).

It is found in the cytoplasm. The enzyme catalyses tRNA(Thr) + L-threonine + ATP = L-threonyl-tRNA(Thr) + AMP + diphosphate + H(+). Its function is as follows. Catalyzes the attachment of threonine to tRNA(Thr) in a two-step reaction: L-threonine is first activated by ATP to form Thr-AMP and then transferred to the acceptor end of tRNA(Thr). Also edits incorrectly charged L-seryl-tRNA(Thr). This is Threonine--tRNA ligase from Corynebacterium diphtheriae (strain ATCC 700971 / NCTC 13129 / Biotype gravis).